The chain runs to 522 residues: MASGGGGCSASERLPPPFPGLEPESEGAVGGSEPEAGDSDTEGEDIFTGAAAVSKPQSPKRIASLLPINSGSKENGIHEEQDQEPQDLFADATVELSLDSTQNNQKKVPAKTLISLPPQEATNSSKPQPSYEELEEEEQEDQFDLTVGITDPEKIGDGMNAYVAYKVTTQTSLPMFRSKHFAVKRRFSDFLGLYEKLSEKHSQNGFIVPPPPEKSLIGMTKVKVGKEDSSSAEFLEKRRAALERYLQRIVNHPTMLQDPDVREFLEKEELPRAVGTQTLSGAGLLKMFNKATDAVSKMTINMNESDIWFEEKLQEVECEEQRLRKLHAVVETLVNHRKELALNTAQFAKSLAMLGSSEDNTALSRALSQLAEVEEKIEQLHQEQANNDFFLLAELLSDYIRLLAIVRAAFDQRMKTWQRWQDAQTTLQKKREAEARLLWANKPDKLQQAKDEIVEWESRVTQYERDFERISTVVRKEVIRFEKEKSRDFRNHVIQYLETLLHSQQQLAKYWEAFLPEAKAIS.

The segment at 1-142 (MASGGGGCSA…ELEEEEQEDQ (142 aa)) is disordered. Residues serine 32 and serine 39 each carry the phosphoserine modification. Residues 35 to 45 (EAGDSDTEGED) show a composition bias toward acidic residues. A phosphothreonine mark is found at threonine 41 and threonine 48. Phosphoserine occurs at positions 58 and 72. A compositionally biased stretch (acidic residues) spans 132–142 (EELEEEEQEDQ). Residues 143–272 (FDLTVGITDP…EFLEKEELPR (130 aa)) form the PX domain. The a 1,2-diacyl-sn-glycero-3-phospho-(1D-myo-inositol-3-phosphate) site is built by arginine 186, serine 188, and lysine 214. Residue serine 188 is modified to Phosphoserine. Lysine 237 is subject to N6-acetyllysine. Arginine 238 lines the a 1,2-diacyl-sn-glycero-3-phospho-(1D-myo-inositol-3-phosphate) pocket. Serine 280 is modified (phosphoserine). The tract at residues 281–298 (GAGLLKMFNKATDAVSKM) is membrane-binding amphipathic helix. Residues 302 to 522 (MNESDIWFEE…AFLPEAKAIS (221 aa)) enclose the BAR domain.

Belongs to the sorting nexin family. Predominantly forms heterodimers with BAR domain-containing sorting nexins SNX5, SNX6 and SNX32; can self-associate to form homodimers. The heterodimers are proposed to self-assemble into helical arrays on the membrane to stabilize and expand local membrane curvature underlying endosomal tubule formation. Thought to be a component of the originally described retromer complex (also called SNX-BAR retromer) which is a pentamer containing the heterotrimeric retromer cargo-selective complex (CSC), also described as vacuolar protein sorting subcomplex (VPS) and a heterodimeric membrane-deforming subcomplex formed between SNX1 or SNX2 and SNX5 or SNX6 (also called SNX-BAR subcomplex); the respective CSC and SNX-BAR subcomplexes associate with low affinity. Interacts with SNX5, SNX6, SNX32, VPS26A, VPS29, VPS35, DRD5, DENND5A, KALRN, RHOG (GDP-bound form). The interaction with SNX2 is reported controversially. Interacts with DNAJC13; prevented by presence of HGS. Interacts with HGS.

It is found in the endosome membrane. The protein resides in the golgi apparatus. The protein localises to the trans-Golgi network membrane. It localises to the early endosome membrane. Its subcellular location is the cell projection. It is found in the lamellipodium. In terms of biological role, involved in several stages of intracellular trafficking. Interacts with membranes containing phosphatidylinositol 3-phosphate (PtdIns(3P)) or phosphatidylinositol 3,5-bisphosphate (PtdIns(3,5)P2). Acts in part as component of the retromer membrane-deforming SNX-BAR subcomplex. The SNX-BAR retromer mediates retrograde transport of cargo proteins from endosomes to the trans-Golgi network (TGN) and is involved in endosome-to-plasma membrane transport for cargo protein recycling. The SNX-BAR subcomplex functions to deform the donor membrane into a tubular profile called endosome-to-TGN transport carrier (ETC). Can sense membrane curvature and has in vitro vesicle-to-membrane remodeling activity. Involved in retrograde endosome-to-TGN transport of lysosomal enzyme receptors (IGF2R, M6PR and SORT1). Plays a role in targeting ligand-activated EGFR to the lysosomes for degradation after endocytosis from the cell surface and release from the Golgi. Involvement in retromer-independent endocytic trafficking of P2RY1 and lysosomal degradation of protease-activated receptor-1/F2R. Promotes KALRN- and RHOG-dependent but retromer-independent membrane remodeling such as lamellipodium formation; the function is dependent on GEF activity of KALRN. Required for endocytosis of DRD5 upon agonist stimulation but not for basal receptor trafficking. This chain is Sorting nexin-1 (SNX1), found in Bos taurus (Bovine).